The sequence spans 172 residues: Trypsin inhibitor DE-3 (172 aa).

Intrachain disulfides connect Cys-39–Cys-83 and Cys-132–Cys-139.

Belongs to the protease inhibitor I3 (leguminous Kunitz-type inhibitor) family.

Inhibition of trypsin. This is Trypsin inhibitor DE-3 from Erythrina caffra (Kaffir tree).